The following is a 412-amino-acid chain: D-amino acid dehydrogenase 3 (412 aa).

4–18 (IVVIGAGIAGVSTAY) is a binding site for FAD.

It belongs to the DadA oxidoreductase family. FAD is required as a cofactor.

It carries out the reaction a D-alpha-amino acid + A + H2O = a 2-oxocarboxylate + AH2 + NH4(+). Oxidative deamination of D-amino acids. This chain is D-amino acid dehydrogenase 3 (dadA3), found in Mesorhizobium japonicum (strain LMG 29417 / CECT 9101 / MAFF 303099) (Mesorhizobium loti (strain MAFF 303099)).